A 607-amino-acid polypeptide reads, in one-letter code: NAD-dependent malic enzyme 2, mitochondrial (607 aa).

The N-terminal 32 residues, 1–32 (MMWKNIAGLSKAAAAARTHGSRRCFSTAIPGP), are a transit peptide targeting the mitochondrion. Residue Y136 is the Proton donor of the active site. An NAD(+)-binding site is contributed by R189. Residue K207 is the Proton acceptor of the active site. A divalent metal cation is bound by residues E278, D279, and D302. Positions 302 and 449 each coordinate NAD(+).

Belongs to the malic enzymes family. In terms of assembly, homodimer. Heterodimer of two related subunits in NAD-MEH complex. Interacts with NAD-ME1. The cofactor is Mg(2+). Mn(2+) is required as a cofactor. Expressed in leaves, stems, flowers, and roots (at protein level). Present in pollen.

Its subcellular location is the mitochondrion. The enzyme catalyses (S)-malate + NAD(+) = pyruvate + CO2 + NADH. Its activity is regulated as follows. Activated by 2-ketoglutarate, phosphoenolpyruvate (PEP), fructose 1,6-biphosphate (FBP) and coenzyme A (acetyl-CoA and CoA) as homodimer and by oxaloacetate (OAA), 2-ketoglutarate, succinate, fumarate and CoA as heterodimer NAD-MEH. Repressed by succinate and fumarate as homodimer, in the presence of NAD(+) and competitively toward the substrate L-malate. Functionally, involved in the regulation of sugars and amino acids metabolisms during the night period. The protein is NAD-dependent malic enzyme 2, mitochondrial (NAD-ME2) of Arabidopsis thaliana (Mouse-ear cress).